A 320-amino-acid polypeptide reads, in one-letter code: Flavonol 4'-sulfotransferase (320 aa).

69–74 is a binding site for 3'-phosphoadenylyl sulfate; the sequence is KSGTTW. The active-site Proton acceptor is His-129. 3'-phosphoadenylyl sulfate-binding positions include Arg-151, Ser-159, Tyr-217, and 285 to 287; that span reads RKA.

Belongs to the sulfotransferase 1 family. Highest in shoot tips and lowest in mature leaves and roots.

It localises to the cytoplasm. The enzyme catalyses quercetin 3-sulfate + 3'-phosphoadenylyl sulfate = quercetin 3,4'-bissulfate + adenosine 3',5'-bisphosphate + H(+). With respect to regulation, no requirement for divalent cations and insensitive to p-chloromercuribenzoate, iodoacetate, or iodoacetamide. Functionally, sulfotransferase that utilizes 3'-phospho-5'-adenylyl sulfate (PAPS) as sulfonate donor to catalyze the sulfate conjugation of quercetin 3-sulfate &gt; kaempferol 3-sulfate &gt; isorhamnetin 3-sulfate &gt; patuletin 3-sulfate, but not tamarixetin 3-sulfate. O-sulfation of position 4' of flavonol. May play a role in auxin transport. This chain is Flavonol 4'-sulfotransferase, found in Flaveria chlorifolia (Clasping yellowtops).